Reading from the N-terminus, the 107-residue chain is Small leucine-rich protein 1 (107 aa).

The next 2 helical transmembrane spans lie at 19 to 39 (AALV…LAMS) and 53 to 73 (FLFF…IAYF). The disordered stretch occupies residues 85-107 (SQNCDRQHNPKDGSSLYQRMKWT).

Its subcellular location is the membrane. The chain is Small leucine-rich protein 1 (SMLR1) from Homo sapiens (Human).